Reading from the N-terminus, the 344-residue chain is GTPase Obg (344 aa).

Residues Met1–Ser12 show a composition bias toward polar residues. Positions Met1–Gly36 are disordered. The region spanning Met1–Ile158 is the Obg domain. The 183-residue stretch at Ala159–Lys341 folds into the OBG-type G domain. GTP-binding positions include Gly165–Ser172, Phe190–Thr194, Asp212–Gly215, Thr280–Asp283, and Ser322–Val324. Positions 172 and 192 each coordinate Mg(2+).

It belongs to the TRAFAC class OBG-HflX-like GTPase superfamily. OBG GTPase family. Monomer. Mg(2+) is required as a cofactor.

The protein localises to the cytoplasm. Its function is as follows. An essential GTPase which binds GTP, GDP and possibly (p)ppGpp with moderate affinity, with high nucleotide exchange rates and a fairly low GTP hydrolysis rate. Plays a role in control of the cell cycle, stress response, ribosome biogenesis and in those bacteria that undergo differentiation, in morphogenesis control. This is GTPase Obg from Campylobacter fetus subsp. fetus (strain 82-40).